The chain runs to 1180 residues: RecBCD enzyme subunit RecB (1180 aa).

The tract at residues 1–852 (MITTIPKSIN…QSGKNHISTK (852 aa)) is DNA-binding and helicase activity, interacts with RecC. The UvrD-like helicase ATP-binding domain maps to 3–448 (TTIPKSINVT…YFLDTNWRSS (446 aa)). Position 24–31 (24–31 (ASAGTGKT)) interacts with ATP. The UvrD-like helicase C-terminal domain occupies 478 to 745 (SSRINKTTKF…KIVSIHKSKG (268 aa)). A nuclease activity, interacts with RecD and RecA region spans residues 905-1180 (NYNFTSYSQL…EIIKKLEQIF (276 aa)). Residues H964, D1075, and D1088 each coordinate Mg(2+). The active-site For nuclease activity is the D1088.

This sequence belongs to the helicase family. UvrD subfamily. As to quaternary structure, heterotrimer of RecB, RecC and RecD. All subunits contribute to DNA-binding. Interacts with RecA. It depends on Mg(2+) as a cofactor.

It carries out the reaction Exonucleolytic cleavage (in the presence of ATP) in either 5'- to 3'- or 3'- to 5'-direction to yield 5'-phosphooligonucleotides.. The enzyme catalyses Couples ATP hydrolysis with the unwinding of duplex DNA by translocating in the 3'-5' direction.. It catalyses the reaction ATP + H2O = ADP + phosphate + H(+). A helicase/nuclease that prepares dsDNA breaks (DSB) for recombinational DNA repair. Binds to DSBs and unwinds DNA via a highly rapid and processive ATP-dependent bidirectional helicase activity. Unwinds dsDNA until it encounters a Chi (crossover hotspot instigator) sequence from the 3' direction. Cuts ssDNA a few nucleotides 3' to the Chi site. The properties and activities of the enzyme are changed at Chi. The Chi-altered holoenzyme produces a long 3'-ssDNA overhang and facilitates RecA-binding to the ssDNA for homologous DNA recombination and repair. Holoenzyme degrades any linearized DNA that is unable to undergo homologous recombination. In the holoenzyme this subunit contributes ATPase, 3'-5' helicase, exonuclease activity and loads RecA onto ssDNA. This Buchnera aphidicola subsp. Baizongia pistaciae (strain Bp) protein is RecBCD enzyme subunit RecB.